The chain runs to 343 residues: Anthranilate phosphoribosyltransferase (343 aa).

5-phospho-alpha-D-ribose 1-diphosphate contacts are provided by residues glycine 84, 87-88 (GD), threonine 92, 94-97 (NIST), 112-120 (KHGNRSVSS), and serine 124. Glycine 84 lines the anthranilate pocket. Residue serine 96 participates in Mg(2+) binding. Asparagine 115 serves as a coordination point for anthranilate. Arginine 170 serves as a coordination point for anthranilate. Residues aspartate 229 and glutamate 230 each coordinate Mg(2+).

This sequence belongs to the anthranilate phosphoribosyltransferase family. As to quaternary structure, homodimer. The cofactor is Mg(2+).

It catalyses the reaction N-(5-phospho-beta-D-ribosyl)anthranilate + diphosphate = 5-phospho-alpha-D-ribose 1-diphosphate + anthranilate. Its pathway is amino-acid biosynthesis; L-tryptophan biosynthesis; L-tryptophan from chorismate: step 2/5. Its function is as follows. Catalyzes the transfer of the phosphoribosyl group of 5-phosphorylribose-1-pyrophosphate (PRPP) to anthranilate to yield N-(5'-phosphoribosyl)-anthranilate (PRA). This Stenotrophomonas maltophilia (strain K279a) protein is Anthranilate phosphoribosyltransferase.